The following is a 388-amino-acid chain: CUE domain-containing protein 1 (388 aa).

Residues 1 to 10 (MTSLFRRSSS) are compositionally biased toward low complexity. The interval 1-45 (MTSLFRRSSSGSGGGGATGARGAGTGAGDGSTAPQELNNSRPARQ) is disordered. The segment covering 11-29 (GSGGGGATGARGAGTGAGD) has biased composition (gly residues). The CUE domain maps to 50–93 (EFNQAMDDFKTMFPNMDYDIIECVLRANSGAVDATIDQLLQMNL). Disordered stretches follow at residues 152-178 (PTPP…WNPP), 196-225 (DSIQ…ACDQ), 270-302 (SQKS…TVSE), and 369-388 (DFRG…REGQ). A compositionally biased stretch (polar residues) spans 290 to 300 (VPGTSETNPTV).

In Mus musculus (Mouse), this protein is CUE domain-containing protein 1 (Cuedc1).